The sequence spans 397 residues: Putative odorant receptor 83c (397 aa).

Over 1 to 39 (MSTSESPSSRFRELSKYINSLTNLLGVDFLSPKLKFNYR) the chain is Cytoplasmic. The helical transmembrane segment at 40–60 (TWTTIFAIANYTGFTVFTILN) threads the bilayer. Topologically, residues 61 to 70 (NGGDWRVGLK) are extracellular. The chain crosses the membrane as a helical span at residues 71-90 (ASLMTGGLFHGLGKFLTCLL). The Cytoplasmic portion of the chain corresponds to 91–136 (KHQDMRRLVLYSQSIYDEYETRGDSYHRTLNSNIDRLLGIMKIIRN). Residues 137-157 (GYVFAFCLMELLPLAMLMYDG) form a helical membrane-spanning segment. Topologically, residues 158-186 (TRVTAMQYLIPGLPLENNYCYVVTYMIQT) are extracellular. Residues 187 to 207 (VTMLVQGVGFYSGDLFVFLGL) form a helical membrane-spanning segment. Topologically, residues 208–282 (TQILTFADML…ALYYELIATQ (75 aa)) are cytoplasmic. A helical membrane pass occupies residues 283–299 (VLSMALAMMLSFCINLS). Over 300–305 (SFHMPS) the chain is Extracellular. A helical membrane pass occupies residues 306 to 326 (AIFFVVSAYSMSIYCILGTIL). At 327–365 (EFAYDQVYESICNVTWYELSGEQRKLFGFLLRESQYPHN) the chain is on the cytoplasmic side. Residues 366–386 (IQILGVMSLSVRTALQIVKLI) traverse the membrane as a helical segment. The Extracellular segment spans residues 387 to 397 (YSVSMMMMNRA).

The protein belongs to the insect chemoreceptor superfamily. Heteromeric odorant receptor channel (TC 1.A.69) family. Or67d subfamily. As to quaternary structure, interacts with Orco. Complexes exist early in the endomembrane system in olfactory sensory neurons (OSNs), coupling these complexes to the conserved ciliary trafficking pathway. Expressed in olfactory sensory neurons in the antenna.

It is found in the cell membrane. In terms of biological role, odorant receptor which mediates acceptance or avoidance behavior, depending on its substrates. The odorant receptor repertoire encodes a large collection of odor stimuli that vary widely in identity, intensity, and duration. May form a complex with Orco to form odorant-sensing units, providing sensitive and prolonged odorant signaling and calcium permeability. This chain is Putative odorant receptor 83c (Or83c), found in Drosophila melanogaster (Fruit fly).